A 254-amino-acid polypeptide reads, in one-letter code: MPQQIELRNIALQAAQPLVHGVSLTLQRGRVLALVGGSGSGKSLTCAATLGILPAGVRQTAGEILADGKAVYPCALRGIKIATIMQNPRSAFNPLHTMHTHARETCLALGKPADDATLTAAIEAVGLENAARVLKLYPFEMSGGMLQRMMIAMAVLCESPFIIADEPTTDLDVVAQARILDLLESIMQKQAPGMLLVTHDMGVVARLADDVAVMSQGKIVEQGDVETLFNAPKHTVTRSLVSAHLALYGMELAS.

Residues 2–241 (PQQIELRNIA…PKHTVTRSLV (240 aa)) enclose the ABC transporter domain. 36-43 (GGSGSGKS) contributes to the ATP binding site.

This sequence belongs to the ABC transporter superfamily. Nickel importer (TC 3.A.1.5.3) family. As to quaternary structure, the complex is composed of two ATP-binding proteins (NikD and NikE), two transmembrane proteins (NikB and NikC) and a solute-binding protein (NikA).

Its subcellular location is the cell inner membrane. The catalysed reaction is Ni(2+)(out) + ATP + H2O = Ni(2+)(in) + ADP + phosphate + H(+). Part of the ABC transporter complex NikABCDE involved in nickel import. Responsible for energy coupling to the transport system. This chain is Nickel import ATP-binding protein NikD, found in Shigella boydii serotype 4 (strain Sb227).